The sequence spans 225 residues: Claudin-8 (225 aa).

The Cytoplasmic portion of the chain corresponds to 1 to 7; it reads MATYALQ. A helical transmembrane segment spans residues 8-28; it reads MAALVLGGVGMVGTVAVTIMP. The Extracellular segment spans residues 29–81; it reads QWRVSAFIESNIVVFENRWEGLWMNCMRHANIRMQCKVYDSLLALSPDLQASR. A helical membrane pass occupies residues 82–102; sequence GLMCAASVLAFLAFMTAILGM. The Cytoplasmic portion of the chain corresponds to 103–117; the sequence is KCTRCTGDDENVKSR. A helical transmembrane segment spans residues 118–138; the sequence is ILLTAGIIFFITGLVVLIPVS. The Extracellular segment spans residues 139–166; that stretch reads WVANSIIRDFYNPLVDVALKRELGEALY. The helical transmembrane segment at 167–187 threads the bilayer; that stretch reads IGWTTALVLIAGGALFCCVFC. Residues 188 to 225 lie on the Cytoplasmic side of the membrane; the sequence is CTERSNSYRYSVPSHRTTQRSFHAEKRSPSIYSKSQYV. A Glycyl lysine isopeptide (Lys-Gly) (interchain with G-Cter in ubiquitin) cross-link involves residue K213. The tract at residues 224 to 225 is interactions with TJP1, TJP2 and TJP3; sequence YV.

The protein belongs to the claudin family. In terms of assembly, can form heteropolymeric strands with other claudins. Interacts with CLDN4. Directly interacts with TJP1/ZO-1, TJP2/ZO-2 and TJP3/ZO-3. Interacts with KLHL3. Ubiquitinated by the BCR(KLHL3) E3 ubiquitin ligase complex in the kidney, leading to its degradation. As to expression, expressed primarily in lung and kidney. Present in both cortical and medullar collecting ducts (at protein level).

It localises to the cell junction. The protein localises to the tight junction. Its subcellular location is the cell membrane. It carries out the reaction chloride(in) = chloride(out). The enzyme catalyses bromide(in) = bromide(out). The catalysed reaction is iodide(out) = iodide(in). It catalyses the reaction fluoride(in) = fluoride(out). Functionally, can associate with other claudins to regulate tight junction structural and functional strand dynamics. May coassemble with CLDN4 into tight junction strands containing anion-selective channels that convey paracellular chloride permeability in renal collecting ducts. Cannot form tight junction strands on its own. In Mus musculus (Mouse), this protein is Claudin-8.